Here is a 350-residue protein sequence, read N- to C-terminus: Vancomycin C-type resistance protein VanC2 (350 aa).

Residues Glu-14 and Ser-187 contribute to the active site. The ATP-grasp domain maps to 141-343 (HQAAAAIGVQ…YQELLQKLLV (203 aa)). 171-226 (IQTHGFPVFFKPNEAGSSKGITKVTCVEEIASALKEAFTYCSAVLLQKNIAGVEIG) provides a ligand contact to ATP. Mg(2+) is bound by residues Asp-297, Glu-310, and Asn-312. The Mn(2+) site is built by Asp-297, Glu-310, and Asn-312. Residue Ser-321 is part of the active site.

Belongs to the D-alanine--D-alanine ligase family. In terms of assembly, homodimer. Mg(2+) is required as a cofactor. Mn(2+) serves as cofactor.

The protein localises to the cell membrane. The catalysed reaction is D-serine + D-alanine + ATP = D-alanyl-D-serine + ADP + phosphate + H(+). The protein operates within cell wall biogenesis; peptidoglycan biosynthesis. Inhibited by D-cycloserine. Functionally, required for low-level resistance to the glycopeptide antibiotic vancomycin. D-alanine--D-alanine ligase of altered specificity, which catalyzes synthesis of D-Ala-D-Ser; produces a peptidoglycan which does not terminate in D-alanine but in D-serine, thus probably reducing affinity for vancomycin. Only insignificant catalytic synthesis of D-Ala-D-Ala in vitro. This chain is Vancomycin C-type resistance protein VanC2, found in Enterococcus casseliflavus (Enterococcus flavescens).